Reading from the N-terminus, the 176-residue chain is Translation initiation factor IF-3 (176 aa).

Belongs to the IF-3 family. As to quaternary structure, monomer.

The protein localises to the cytoplasm. Its function is as follows. IF-3 binds to the 30S ribosomal subunit and shifts the equilibrium between 70S ribosomes and their 50S and 30S subunits in favor of the free subunits, thus enhancing the availability of 30S subunits on which protein synthesis initiation begins. In Streptococcus pyogenes serotype M18 (strain MGAS8232), this protein is Translation initiation factor IF-3.